We begin with the raw amino-acid sequence, 107 residues long: MQLSTTPTLEGFTITEYCGVVTGEAILGANIFRDFFASIRDVVGGRSGAYEKELRKARQIAFKELQEQAADLGANAVVGIDLDYETVGKDGSMLMVTVSGTAVKVRR.

Belongs to the UPF0145 family.

In Pectobacterium carotovorum subsp. carotovorum (strain PC1), this protein is UPF0145 protein PC1_1703.